Here is a 274-residue protein sequence, read N- to C-terminus: MIEIKKAKPTSPGRRHVVSVKNTELHTGKPFKGLVEVKKSKAGRNNTGRITVRHQGGGHKQHYRVVDFKRNKDDITAKVERIEYDPNRSANIALVLYADGERRYIVAPKGLKKDMSVISGEKVDVAVGNCMPLRNIPLGTVIHNIEMKPKKGAQMIRSAGTFAQLVGKDNAYAIIRLRSGEMRRVLLDCRAVIGVVSNSEHNLKSLGKAGAKRWRGIRPTVRGVAMNPVDHPHGGGEGRTSGGRHPVTPWGIPTKGYKTRRNKRSNKLIVQKRK.

Residues 224-274 (VAMNPVDHPHGGGEGRTSGGRHPVTPWGIPTKGYKTRRNKRSNKLIVQKRK) are disordered. Positions 257–274 (YKTRRNKRSNKLIVQKRK) are enriched in basic residues.

The protein belongs to the universal ribosomal protein uL2 family. In terms of assembly, part of the 50S ribosomal subunit. Forms a bridge to the 30S subunit in the 70S ribosome.

Functionally, one of the primary rRNA binding proteins. Required for association of the 30S and 50S subunits to form the 70S ribosome, for tRNA binding and peptide bond formation. It has been suggested to have peptidyltransferase activity; this is somewhat controversial. Makes several contacts with the 16S rRNA in the 70S ribosome. In Francisella tularensis subsp. mediasiatica (strain FSC147), this protein is Large ribosomal subunit protein uL2.